The primary structure comprises 359 residues: Ferredoxin--NADP reductase (359 aa).

7 residues coordinate FAD: D48, Q56, Y61, A101, F139, D304, and S345.

This sequence belongs to the ferredoxin--NADP reductase type 2 family. As to quaternary structure, homodimer. Requires FAD as cofactor.

It catalyses the reaction 2 reduced [2Fe-2S]-[ferredoxin] + NADP(+) + H(+) = 2 oxidized [2Fe-2S]-[ferredoxin] + NADPH. This chain is Ferredoxin--NADP reductase, found in Ralstonia pickettii (strain 12J).